Here is a 740-residue protein sequence, read N- to C-terminus: Ion-translocating oxidoreductase complex subunit C (740 aa).

4Fe-4S ferredoxin-type domains are found at residues 369-397 (GEPQ…QQLY) and 407-436 (KATT…VQYF). 8 residues coordinate [4Fe-4S] cluster: Cys-377, Cys-380, Cys-383, Cys-387, Cys-416, Cys-419, Cys-422, and Cys-426. Disordered stretches follow at residues 602–621 (KLEQ…PRKA) and 660–718 (ARAK…RKAA). A compositionally biased stretch (basic and acidic residues) spans 611–621 (KPEEQVDPRKA).

It belongs to the 4Fe4S bacterial-type ferredoxin family. RnfC subfamily. The complex is composed of six subunits: RsxA, RsxB, RsxC, RsxD, RsxE and RsxG. The cofactor is [4Fe-4S] cluster.

The protein localises to the cell inner membrane. In terms of biological role, part of a membrane-bound complex that couples electron transfer with translocation of ions across the membrane. Required to maintain the reduced state of SoxR. This is Ion-translocating oxidoreductase complex subunit C from Escherichia coli O9:H4 (strain HS).